Reading from the N-terminus, the 128-residue chain is Large ribosomal subunit protein bL20c (128 aa).

The protein belongs to the bacterial ribosomal protein bL20 family. As to quaternary structure, component of the chloroplast large ribosomal subunit (LSU). Mature 70S chloroplast ribosomes of higher plants consist of a small (30S) and a large (50S) subunit. The 30S small subunit contains 1 molecule of ribosomal RNA (16S rRNA) and 24 different proteins. The 50S large subunit contains 3 rRNA molecules (23S, 5S and 4.5S rRNA) and 33 different proteins.

Its subcellular location is the plastid. It is found in the chloroplast. Functionally, component of the chloroplast ribosome (chloro-ribosome), a dedicated translation machinery responsible for the synthesis of chloroplast genome-encoded proteins, including proteins of the transcription and translation machinery and components of the photosynthetic apparatus. This Spinacia oleracea (Spinach) protein is Large ribosomal subunit protein bL20c (rpl20).